The following is a 228-amino-acid chain: Glyceraldehyde 3-phosphate phosphatase (228 aa).

This sequence belongs to the HAD-like hydrolase superfamily. Requires Mg(2+) as cofactor.

Functionally, catalyzes the dephosphorylation of D,L-glyceraldehyde 3-phosphate in vitro. The polypeptide is Glyceraldehyde 3-phosphate phosphatase (Methanocaldococcus jannaschii (strain ATCC 43067 / DSM 2661 / JAL-1 / JCM 10045 / NBRC 100440) (Methanococcus jannaschii)).